The primary structure comprises 133 residues: uncharacterized protein (133 aa).

The 130-residue stretch at 1–130 (MPNIVEIAVS…GIIHVIDNVI (130 aa)) folds into the FAS1 domain.

This is an uncharacterized protein from Synechocystis sp. (strain ATCC 27184 / PCC 6803 / Kazusa).